The chain runs to 347 residues: MNPLVTLIIYITLISGTIITMTSSHWLTVWMGLEMNMFAIIPLIMKTHTPRAIEATTKYFLIQASASMLLLMAATINFMEFGQWTVIDMPSPIASTIILAAIMMKLGMAPFHFWVPEVTQGTLLSTSLIILTWQKLAPLSILYQIYPSMNPKIILASAMLSIMIGGWGGLNQTQLRKIMAYSSIAHMGWMSAILIYNPSLMLLNLTLYIIFTITMFTILIHCMATSNKTLSMMWNNTPILMMTLLLTLLSMGGLPPLSGFVPKWLIINEMITNNNITISLTMAMLALLNLYFYMRLIYSSSLTLFPSSNNMKFKWKMNNTPKLPFLPTLTIISILMLPITPMMFIFE.

The next 11 helical transmembrane spans lie at 1-21, 25-45, 59-79, 96-116, 123-143, 153-173, 178-198, 200-220, 239-259, 278-298, and 325-345; these read MNPL…IITM, HWLT…PLIM, YFLI…INFM, TIIL…FWVP, LLST…SILY, IILA…LNQT, IMAY…IYNP, LMLL…TILI, ILMM…PLSG, ISLT…RLIY, and FLPT…MMFI.

The protein belongs to the complex I subunit 2 family. As to quaternary structure, core subunit of respiratory chain NADH dehydrogenase (Complex I) which is composed of 45 different subunits. Interacts with TMEM242.

The protein resides in the mitochondrion inner membrane. The enzyme catalyses a ubiquinone + NADH + 5 H(+)(in) = a ubiquinol + NAD(+) + 4 H(+)(out). Core subunit of the mitochondrial membrane respiratory chain NADH dehydrogenase (Complex I) that is believed to belong to the minimal assembly required for catalysis. Complex I functions in the transfer of electrons from NADH to the respiratory chain. The immediate electron acceptor for the enzyme is believed to be ubiquinone. The protein is NADH-ubiquinone oxidoreductase chain 2 of Oryzorictes hova (Hova rice tenrec).